Reading from the N-terminus, the 60-residue chain is Large ribosomal subunit protein bL32 (60 aa).

Residues 1–20 (MAVPKRKTSPSRRNMRRSHH) are compositionally biased toward basic residues. The segment at 1–60 (MAVPKRKTSPSRRNMRRSHHALGANSFIEDKDTGELRRPHHVDLKTGMYNGKQILTPKED) is disordered. The span at 28-44 (IEDKDTGELRRPHHVDL) shows a compositional bias: basic and acidic residues.

This sequence belongs to the bacterial ribosomal protein bL32 family.

The chain is Large ribosomal subunit protein bL32 from Caulobacter vibrioides (strain ATCC 19089 / CIP 103742 / CB 15) (Caulobacter crescentus).